Reading from the N-terminus, the 246-residue chain is 3-deoxy-manno-octulosonate cytidylyltransferase (246 aa).

Belongs to the KdsB family.

Its subcellular location is the cytoplasm. It carries out the reaction 3-deoxy-alpha-D-manno-oct-2-ulosonate + CTP = CMP-3-deoxy-beta-D-manno-octulosonate + diphosphate. The protein operates within nucleotide-sugar biosynthesis; CMP-3-deoxy-D-manno-octulosonate biosynthesis; CMP-3-deoxy-D-manno-octulosonate from 3-deoxy-D-manno-octulosonate and CTP: step 1/1. Its pathway is bacterial outer membrane biogenesis; lipopolysaccharide biosynthesis. In terms of biological role, activates KDO (a required 8-carbon sugar) for incorporation into bacterial lipopolysaccharide in Gram-negative bacteria. This Paramagnetospirillum magneticum (strain ATCC 700264 / AMB-1) (Magnetospirillum magneticum) protein is 3-deoxy-manno-octulosonate cytidylyltransferase.